A 525-amino-acid chain; its full sequence is MEYDLTKQICSFLDAHMMLPLINYLKDTQQYQENEINKAMADILSQTGCCDYAINAYESIGRDTAPLQAKKQELVGELNKLKEQCSFVTQYIESKKQQKEQQKELKEQQKEQQKEKDTDKTTPTTTDETTTTTTTAPTTTTTTTTTTITPITVIPFSQLLEKITPEILDSIYRFSKLLFEIGQYGSAREHLEIFLQLSPTHQNKDKRLSALWGILESDILSLNWGQAVGDISPLQDQIDSNGTPVEQLGQRAWLIHRALFVYFYNPESRSSLVDLLLEDKYLNAIQTTCPHILRYLAVAIIVNKKKQQSNVFQRILNALVRVVEQEAYVYRDPITQFISSLFVKFNFEDAQAQLILCEKVLKNDFFLNTCVDEFMENARVCVFETYCNILESIDIDMLCKNLRIDPESSEKWIVEAIRNTRFSAKIDSANNQIKMFTQHNSYRQVMDKTKALFNRGIEMVVGINESRSQQNRKGGDNRKNQRGQNRNQQNQQNQQSNESNETTTTTTTAAAATTTTTTTATPTSA.

Residues 102 to 120 (QKELKEQQKEQQKEKDTDK) show a composition bias toward basic and acidic residues. The segment at 102 to 143 (QKELKEQQKEQQKEKDTDKTTPTTTDETTTTTTTAPTTTTTT) is disordered. Residues 121 to 143 (TTPTTTDETTTTTTTAPTTTTTT) show a composition bias toward low complexity. One can recognise a PCI domain in the interval 261-440 (VYFYNPESRS…NQIKMFTQHN (180 aa)). Residues 463 to 525 (INESRSQQNR…TTTTATPTSA (63 aa)) are disordered. The segment covering 482 to 525 (RGQNRNQQNQQNQQSNESNETTTTTTTAAAATTTTTTTATPTSA) has biased composition (low complexity).

The protein belongs to the eIF-3 subunit E family. In terms of assembly, component of the eukaryotic translation initiation factor 3 (eIF-3) complex.

It localises to the cytoplasm. Component of the eukaryotic translation initiation factor 3 (eIF-3) complex, which is involved in protein synthesis of a specialized repertoire of mRNAs and, together with other initiation factors, stimulates binding of mRNA and methionyl-tRNAi to the 40S ribosome. The eIF-3 complex specifically targets and initiates translation of a subset of mRNAs involved in cell proliferation. In Dictyostelium discoideum (Social amoeba), this protein is Eukaryotic translation initiation factor 3 subunit E (eif3E).